Consider the following 388-residue polypeptide: Chorismate synthase (388 aa).

NADP(+) is bound by residues R39 and R45. Residues 95–118 are disordered; that stretch reads EKNEKSRRVSRPRPGHADLVGGMK. FMN contacts are provided by residues 130 to 132, 251 to 252, G296, 311 to 315, and R337; these read RSS, NA, and KPIPT.

Belongs to the chorismate synthase family. Homotetramer. Requires FMNH2 as cofactor.

The enzyme catalyses 5-O-(1-carboxyvinyl)-3-phosphoshikimate = chorismate + phosphate. It participates in metabolic intermediate biosynthesis; chorismate biosynthesis; chorismate from D-erythrose 4-phosphate and phosphoenolpyruvate: step 7/7. In terms of biological role, catalyzes the anti-1,4-elimination of the C-3 phosphate and the C-6 proR hydrogen from 5-enolpyruvylshikimate-3-phosphate (EPSP) to yield chorismate, which is the branch point compound that serves as the starting substrate for the three terminal pathways of aromatic amino acid biosynthesis. This reaction introduces a second double bond into the aromatic ring system. This chain is Chorismate synthase, found in Listeria monocytogenes serotype 4b (strain CLIP80459).